The following is a 137-amino-acid chain: Large ribosomal subunit protein uL16 (137 aa).

The protein belongs to the universal ribosomal protein uL16 family. Part of the 50S ribosomal subunit.

In terms of biological role, binds 23S rRNA and is also seen to make contacts with the A and possibly P site tRNAs. The polypeptide is Large ribosomal subunit protein uL16 (Alkalilimnicola ehrlichii (strain ATCC BAA-1101 / DSM 17681 / MLHE-1)).